The sequence spans 486 residues: Probable glucan endo-1,3-beta-glucosidase eglC (486 aa).

A signal peptide spans 1–18 (MQLTQLLALALSLATSEA). The N-linked (GlcNAc...) asparagine glycan is linked to Asn84. Glu128 (proton donor) is an active-site residue. Asn183 carries N-linked (GlcNAc...) asparagine glycosylation. The active-site Nucleophile is the Glu239. N-linked (GlcNAc...) asparagine glycans are attached at residues Asn315, Asn386, Asn396, and Asn404. The tract at residues 330 to 458 (AAAGGVAGGS…SSGAASPSST (129 aa)) is disordered. Composition is skewed to low complexity over residues 341–404 (GSAS…HGSN) and 413–424 (SVSNVSPSKSSS). Residues 430–442 (AATSMGASPSSVG) are compositionally biased toward polar residues. The segment covering 445-458 (GPSKSSGAASPSST) has biased composition (low complexity). A lipid anchor (GPI-anchor amidated glycine) is attached at Gly463. A propeptide spans 464 to 486 (AATSVSAPVVHVVLLALMMVIAA) (removed in mature form).

This sequence belongs to the glycosyl hydrolase 17 family. Post-translationally, the GPI-anchor is attached to the protein in the endoplasmic reticulum and serves to target the protein to the cell surface. There, the glucosamine-inositol phospholipid moiety is cleaved off and the GPI-modified mannoprotein is covalently attached via its lipidless GPI glycan remnant to the 1,6-beta-glucan of the outer cell wall layer.

The protein resides in the cell membrane. Its subcellular location is the secreted. It is found in the cell wall. It catalyses the reaction Hydrolysis of (1-&gt;3)-beta-D-glucosidic linkages in (1-&gt;3)-beta-D-glucans.. In terms of biological role, glucanases play a role in cell expansion during growth, in cell-cell fusion during mating, and in spore release during sporulation. This enzyme may be involved in beta-glucan degradation and also function biosynthetically as a transglycosylase. This Aspergillus terreus (strain NIH 2624 / FGSC A1156) protein is Probable glucan endo-1,3-beta-glucosidase eglC (eglC).